An 801-amino-acid polypeptide reads, in one-letter code: Ribosome biogenesis protein ERB1 (801 aa).

Disordered regions lie at residues 1–135 (MGSK…LEDR) and 358–377 (PEYL…DPED). Residues 35–90 (SEDEEDYIPSSEVDEDDDDDADESASEDSDDSNDSEDDEVEEDDEALLSDEIPSEG) show a composition bias toward acidic residues. 3 stretches are compositionally biased toward basic and acidic residues: residues 91–113 (ESEK…KEPS), 124–135 (PPRKEDEELEDR), and 362–377 (PTKE…DPED). WD repeat units lie at residues 451-490 (GHEG…QVWS) and 494-534 (NGDE…VTPA). Residues 546–570 (GFGHATNGKQQANLPPGKEPPGKWA) form a disordered region. WD repeat units lie at residues 586-628 (TVRS…TQIP), 631-669 (KLNG…LVKI), 672-711 (PGAK…RPYK), 715-755 (FHTE…DQLE), and 771-801 (VNKL…RLWM).

The protein belongs to the WD repeat BOP1/ERB1 family. As to quaternary structure, component of the NOP7 complex, composed of ERB1, NOP7 and YTM1. The complex is held together by ERB1, which interacts with NOP7 via its N-terminal domain and with YTM1 via a high-affinity interaction between the seven-bladed beta-propeller domains of the 2 proteins. The NOP7 complex associates with the 66S pre-ribosome.

It is found in the nucleus. The protein localises to the nucleolus. The protein resides in the nucleoplasm. Its function is as follows. Component of the NOP7 complex, which is required for maturation of the 25S and 5.8S ribosomal RNAs and formation of the 60S ribosome. The protein is Ribosome biogenesis protein ERB1 of Chaetomium thermophilum (strain DSM 1495 / CBS 144.50 / IMI 039719) (Thermochaetoides thermophila).